The sequence spans 227 residues: Cytochrome c oxidase subunit 2 (227 aa).

Residues 1 to 14 are Mitochondrial intermembrane-facing; it reads MAYPFQLGLQDATS. Residues 15 to 45 form a helical membrane-spanning segment; it reads PIMEELLHFHDHALMIVFLISSLVLYIISLM. The Mitochondrial matrix segment spans residues 46-59; it reads LTTKLTHTSTMDAQ. A helical transmembrane segment spans residues 60-87; that stretch reads EVETVWTILPAIILILIALPSLRILYMM. The Mitochondrial intermembrane segment spans residues 88–227; sequence DEINNPSLTV…YFETWSALMV (140 aa). H161, C196, E198, C200, H204, and M207 together coordinate Cu cation. E198 provides a ligand contact to Mg(2+). At Y218 the chain carries Phosphotyrosine.

The protein belongs to the cytochrome c oxidase subunit 2 family. In terms of assembly, component of the cytochrome c oxidase (complex IV, CIV), a multisubunit enzyme composed of 14 subunits. The complex is composed of a catalytic core of 3 subunits MT-CO1, MT-CO2 and MT-CO3, encoded in the mitochondrial DNA, and 11 supernumerary subunits COX4I, COX5A, COX5B, COX6A, COX6B, COX6C, COX7A, COX7B, COX7C, COX8 and NDUFA4, which are encoded in the nuclear genome. The complex exists as a monomer or a dimer and forms supercomplexes (SCs) in the inner mitochondrial membrane with NADH-ubiquinone oxidoreductase (complex I, CI) and ubiquinol-cytochrome c oxidoreductase (cytochrome b-c1 complex, complex III, CIII), resulting in different assemblies (supercomplex SCI(1)III(2)IV(1) and megacomplex MCI(2)III(2)IV(2)). Found in a complex with TMEM177, COA6, COX18, COX20, SCO1 and SCO2. Interacts with TMEM177 in a COX20-dependent manner. Interacts with COX20. Interacts with COX16. Requires Cu cation as cofactor.

It localises to the mitochondrion inner membrane. It carries out the reaction 4 Fe(II)-[cytochrome c] + O2 + 8 H(+)(in) = 4 Fe(III)-[cytochrome c] + 2 H2O + 4 H(+)(out). Component of the cytochrome c oxidase, the last enzyme in the mitochondrial electron transport chain which drives oxidative phosphorylation. The respiratory chain contains 3 multisubunit complexes succinate dehydrogenase (complex II, CII), ubiquinol-cytochrome c oxidoreductase (cytochrome b-c1 complex, complex III, CIII) and cytochrome c oxidase (complex IV, CIV), that cooperate to transfer electrons derived from NADH and succinate to molecular oxygen, creating an electrochemical gradient over the inner membrane that drives transmembrane transport and the ATP synthase. Cytochrome c oxidase is the component of the respiratory chain that catalyzes the reduction of oxygen to water. Electrons originating from reduced cytochrome c in the intermembrane space (IMS) are transferred via the dinuclear copper A center (CU(A)) of subunit 2 and heme A of subunit 1 to the active site in subunit 1, a binuclear center (BNC) formed by heme A3 and copper B (CU(B)). The BNC reduces molecular oxygen to 2 water molecules using 4 electrons from cytochrome c in the IMS and 4 protons from the mitochondrial matrix. The chain is Cytochrome c oxidase subunit 2 (MT-CO2) from Canis aureus (Golden jackal).